A 774-amino-acid chain; its full sequence is Glycophorin-binding protein 130 (774 aa).

Residues 84–88 (RILAE) carry the PEXEL motif motif. Disordered stretches follow at residues 97 to 243 (EKTT…AADP), 256 to 291 (LTNT…EYAS), 310 to 334 (DPND…PEGQ), 358 to 383 (NTDP…DPEG), 410 to 434 (DPND…PEGQ), 458 to 481 (NTDP…SDPE), 509 to 533 (DPND…PEGQ), 609 to 632 (DPND…DPEG), 661 to 682 (NDEV…DPEG), and 709 to 734 (DPND…EGQI). Basic and acidic residues-rich tracts occupy residues 117 to 140 (TKKD…SEKQ) and 174 to 198 (KKEE…EPKA). The span at 201-228 (VSQKPSTSTRSNNEVKIRAASNQETLTS) shows a compositional bias: polar residues. GBP repeat units lie at residues 226–275 (LTSA…NKED), 276–325 (LTSA…NKED), 326–375 (LTSA…NKED), 376–425 (LTSA…NKED), 426–474 (LTSA…DNKE), 475–524 (LTSS…NKED), 525–574 (LTSA…NKEE), 575–624 (LTSS…NKED), 625–674 (LTSA…NKED), 675–724 (LTSA…NKED), and 725–774 (LTSA…NNEA). Basic and acidic residues-rich tracts occupy residues 264–276 (EVER…KEDL), 314–326 (DVER…KEDL), 364–376 (EVER…KEDL), 414–426 (EVER…KEDL), 464–476 (EVER…KELT), 513–525 (EVER…KEDL), 613–625 (EVER…KEDL), 663–675 (EVER…KEDL), and 713–725 (DVER…KEDL).

Interacts with host glycophorin.

Its subcellular location is the secreted. It localises to the cell surface. The protein resides in the host cytoplasm. In terms of biological role, involved in merozoite invasion of host erythrocytes. The polypeptide is Glycophorin-binding protein 130 (Plasmodium falciparum (isolate FCR-3 / Gambia)).